Here is a 281-residue protein sequence, read N- to C-terminus: Large ribosomal subunit protein uL2 (281 aa).

The segment at 223-255 (TVRGSVMNPNDHPHGGGEGRAPIGRKSPVTPWG) is disordered.

It belongs to the universal ribosomal protein uL2 family. As to quaternary structure, part of the 50S ribosomal subunit. Forms a bridge to the 30S subunit in the 70S ribosome.

In terms of biological role, one of the primary rRNA binding proteins. Required for association of the 30S and 50S subunits to form the 70S ribosome, for tRNA binding and peptide bond formation. It has been suggested to have peptidyltransferase activity; this is somewhat controversial. Makes several contacts with the 16S rRNA in the 70S ribosome. The sequence is that of Large ribosomal subunit protein uL2 from Mycoplasma capricolum subsp. capricolum (strain California kid / ATCC 27343 / NCTC 10154).